We begin with the raw amino-acid sequence, 600 residues long: NADH-quinone oxidoreductase subunit C/D (600 aa).

The NADH dehydrogenase I subunit C stretch occupies residues 1–190; it reads MIDLMPKKNT…EPFFLNEQKE (190 aa). The NADH dehydrogenase I subunit D stretch occupies residues 214–600; that stretch reads EFMFLNLGPN…IDFVMSDVDR (387 aa).

In the N-terminal section; belongs to the complex I 30 kDa subunit family. This sequence in the C-terminal section; belongs to the complex I 49 kDa subunit family. As to quaternary structure, NDH-1 is composed of 13 different subunits. Subunits NuoB, CD, E, F, and G constitute the peripheral sector of the complex.

Its subcellular location is the cell membrane. It catalyses the reaction a quinone + NADH + 5 H(+)(in) = a quinol + NAD(+) + 4 H(+)(out). NDH-1 shuttles electrons from NADH, via FMN and iron-sulfur (Fe-S) centers, to quinones in the respiratory chain. The immediate electron acceptor for the enzyme in this species is believed to be ubiquinone. Couples the redox reaction to proton translocation (for every two electrons transferred, four hydrogen ions are translocated across the cytoplasmic membrane), and thus conserves the redox energy in a proton gradient. This chain is NADH-quinone oxidoreductase subunit C/D, found in Buchnera aphidicola subsp. Acyrthosiphon pisum (strain Tuc7).